The chain runs to 277 residues: Large ribosomal subunit protein uL2 (277 aa).

2 disordered regions span residues 32 to 58 and 225 to 277; these read KSLTKGKVSRAGRDSSGRISVRRRGGG and VAMN…RRNN.

The protein belongs to the universal ribosomal protein uL2 family. As to quaternary structure, part of the 50S ribosomal subunit. Forms a bridge to the 30S subunit in the 70S ribosome.

Functionally, one of the primary rRNA binding proteins. Required for association of the 30S and 50S subunits to form the 70S ribosome, for tRNA binding and peptide bond formation. It has been suggested to have peptidyltransferase activity; this is somewhat controversial. Makes several contacts with the 16S rRNA in the 70S ribosome. This Borrelia duttonii (strain Ly) protein is Large ribosomal subunit protein uL2.